The primary structure comprises 335 residues: POU domain, class 5, transcription factor 2 (335 aa).

A disordered region spans residues 1 to 23 (MAGRRSSNVCPFPGNSGGGLEGP). Residues 113 to 187 (DVSAIQKEME…LLKMWLEEVD (75 aa)) enclose the POU-specific domain. The segment at residues 205–264 (RKRRRASRERRIGSNLEKLFLQCPEPTPQQISYIAGRLRLQKDLVQVWFSNRSQMAGWPT) is a DNA-binding region (homeobox).

It belongs to the POU transcription factor family. Class-5 subfamily. Highly restricted to adult testis.

The protein resides in the nucleus. Its function is as follows. Transcription factor that binds preferentially to the octamer motif (5'-ATGTTAAT-3'). May exert a regulatory function in meiotic events that are required for terminal differentiation of male germ cell. This is POU domain, class 5, transcription factor 2 (Pou5f2) from Rattus norvegicus (Rat).